The sequence spans 228 residues: MTRKIIAVIPASGVGSRMQAGLPKQYLKLQNKTILEHTLEIFLAHPDIEKIVVAVAETDPFYPQVALLDSPKIQIVFGGETRAHSVFNALQVIEDDSWVLVHDAARPCLKRSDLDKLLQIDDKQGAILATPAIDTMKRADGNKIMRTEDRSTLWHALTPQFFPTRLLKQALISAFKKNLTVTDEASAMEFSGYQPRLIAGRSDNLKITRPEDLALAEFYLTQNTEKKI.

The protein belongs to the IspD/TarI cytidylyltransferase family. IspD subfamily.

The enzyme catalyses 2-C-methyl-D-erythritol 4-phosphate + CTP + H(+) = 4-CDP-2-C-methyl-D-erythritol + diphosphate. It functions in the pathway isoprenoid biosynthesis; isopentenyl diphosphate biosynthesis via DXP pathway; isopentenyl diphosphate from 1-deoxy-D-xylulose 5-phosphate: step 2/6. Catalyzes the formation of 4-diphosphocytidyl-2-C-methyl-D-erythritol from CTP and 2-C-methyl-D-erythritol 4-phosphate (MEP). The protein is 2-C-methyl-D-erythritol 4-phosphate cytidylyltransferase of Actinobacillus pleuropneumoniae serotype 5b (strain L20).